A 641-amino-acid polypeptide reads, in one-letter code: Histone-lysine N-methyltransferase set9 (641 aa).

In terms of domain architecture, SET spans 120–234 (CPFEVTTTNR…IGEEITVSYG (115 aa)). 2 disordered regions span residues 261-388 (NLAP…STAA) and 596-628 (GVSFGLTPTPELSDMRSETPDSEALDERGNTRV). Residues 348-359 (AGDSGKSSSAGD) are compositionally biased toward low complexity. The span at 361–381 (VESSGTDSESLTSITPQESQR) shows a compositional bias: polar residues. Positions 608–625 (SDMRSETPDSEALDERGN) are enriched in basic and acidic residues.

This sequence belongs to the class V-like SAM-binding methyltransferase superfamily. Histone-lysine methyltransferase family. Suvar4-20 subfamily.

The protein localises to the nucleus. It localises to the chromosome. It catalyses the reaction L-lysyl(20)-[histone H4] + 3 S-adenosyl-L-methionine = N(6),N(6),N(6)-trimethyl-L-lysyl(20)-[histone H4] + 3 S-adenosyl-L-homocysteine + 3 H(+). In terms of biological role, histone methyltransferase that trimethylates 'Lys-20' of histone H4 to form H4K20me3. The polypeptide is Histone-lysine N-methyltransferase set9 (set9) (Emericella nidulans (strain FGSC A4 / ATCC 38163 / CBS 112.46 / NRRL 194 / M139) (Aspergillus nidulans)).